The primary structure comprises 38 residues: Potassium channel toxin alpha-KTx 2.13 (38 aa).

Disulfide bonds link C7–C29, C13–C34, and C17–C36.

Belongs to the short scorpion toxin superfamily. Potassium channel inhibitor family. Alpha-KTx 02 subfamily. Expressed by the venom gland.

The protein localises to the secreted. In terms of biological role, selective inhibitor of voltage-gated potassium channels, blocks the Kv1.2/KCNA2 (Kd=1.3 nM) and Kv1.3/KCNA3 (Kd=7.2 nM) channels. Association and dissociation rates of the toxin are slower for Kv1.2/KCNA2 than for Kv1.3/KCNA3. This Centruroides suffusus (Durango bark scorpion) protein is Potassium channel toxin alpha-KTx 2.13.